Here is a 151-residue protein sequence, read N- to C-terminus: Small ribosomal subunit protein uS15y (151 aa).

This sequence belongs to the universal ribosomal protein uS15 family.

The chain is Small ribosomal subunit protein uS15y (RPS13B) from Arabidopsis thaliana (Mouse-ear cress).